We begin with the raw amino-acid sequence, 484 residues long: Regulator of G-protein signaling 9 (484 aa).

The region spanning 30–105 is the DEP domain; the sequence is PDTGVKTQSQ…PDSSLYRFQT (76 aa). The G protein gamma domain occupies 219 to 280; sequence ITAVKKEIMY…ITDDTQFWDL (62 aa). Residues 299–414 form the RGS domain; the sequence is NFSELIRDPK…LKSPIYKEML (116 aa).

In terms of assembly, heterodimer with Gbeta5. Interacts with RGS7BP, leading to regulate the subcellular location of the heterodimer formed with Gbeta5. Component of the RGS9-1-Gbeta5 complex composed of RGS9 (RGS9-1), Gbeta5 (GNB5) and RGS9BP. In terms of processing, phosphorylation is decreased by light exposition.

Its subcellular location is the membrane. Its function is as follows. Inhibits signal transduction by increasing the GTPase activity of G protein alpha subunits thereby driving them into their inactive GDP-bound form. Binds to G(t)-alpha. Involved in phototransduction; key element in the recovery phase of visual transduction. This chain is Regulator of G-protein signaling 9, found in Tamias striatus (Eastern chipmunk).